Here is a 278-residue protein sequence, read N- to C-terminus: Ras-related protein Rab-40B (278 aa).

GTP is bound by residues Ser-23, Gly-26, and Lys-27. Residues 41–49 (SPYGHPAGI) are switch-I. Mg(2+) is bound at residue Asp-69. GTP contacts are provided by Gly-72, Asn-126, and Arg-127. The segment at 72-88 (GQGRFCTIFRSYSRGAQ) is switch-II. The 54-residue stretch at 175–228 (LLRHGMDRLWRPSKVLSLQELCCRAVVSCTPGHLVDKLPLPVALRSHLKSFSMA) folds into the SOCS box domain. Residues 245-278 (ANSSHKRNSFRKVRTIRPPQSPPRNCARNSCKIS) form a disordered region. Over residues 248–259 (SHKRNSFRKVRT) the composition is skewed to basic residues. Residue Cys-270 is the site of S-palmitoyl cysteine attachment. A lipid anchor (S-geranylgeranyl cysteine) is attached at Cys-275.

It belongs to the small GTPase superfamily. Rab family. In terms of assembly, component of the cullin-5-RING E3 ubiquitin-protein ligase complex (ECS(RAB40B) complex) composed of CUL5, Elongin BC (ELOB and ELOC), RNF7/RBX2 and RAB40B; RAB40B interaction with ECS complex is GTP-independent. Binds (GTP-bound) LIMA1; interaction promotes LIMA1 subcellular localization in lamellipodia during cell migration. Interacts (GTP-bound) with TKS5/SH3PXD2A (via PX domain); interaction promotes invadopodia-mediated extracellular matrix degradation. Mg(2+) serves as cofactor.

It localises to the cell membrane. Its subcellular location is the cytoplasm. It is found in the cytosol. The protein localises to the cell projection. The protein resides in the lamellipodium membrane. It localises to the ruffle. The enzyme catalyses GTP + H2O = GDP + phosphate + H(+). The protein operates within protein modification; protein ubiquitination. With respect to regulation, regulated by guanine nucleotide exchange factors (GEFs) which promote the exchange of bound GDP for free GTP. Regulated by GTPase activating proteins (GAPs) which increase the GTP hydrolysis activity. Inhibited by GDP dissociation inhibitors (GDIs). In terms of biological role, RAB40B small GTPase acts as substrate-recognition components of the ECS(RAB40B) E3 ubiquitin ligase complex which mediates the ubiquitination of target proteins. The Rab40 subfamily belongs to the Rab family that are key regulators of intracellular membrane trafficking, from the formation of transport vesicles to their fusion with membranes. Rabs cycle between an inactive GDP-bound form and an active GTP-bound form that is able to recruit to membranes different sets of downstream effectors directly responsible for vesicle formation, movement, tethering and fusion. As part of the ECS(RAB40B) complex, GTP-bound RAB40B promotes LIMA1/EPLIN ubiquitination and degradation, thereby regulating leading-edge actin dynamics during cell migration. As part of the ECS(RAB40B) complex, GTP-bound RAB40B also ubiquitinates RAP2A GTPase which promotes its localization to lamellipodia and activation to drive cell migration. The ECS(RAB40B) complex does not mediate canonical ubiquitin-dependent degradation of RAP2. RAB40B also binds TKS5/SH3PXD2A effector independently from ECS complex to promote invadopodia-mediated extracellular matrix degradation. The sequence is that of Ras-related protein Rab-40B from Mus musculus (Mouse).